The sequence spans 263 residues: Small ribosomal subunit protein uS2 (263 aa).

The segment covering 223-249 has biased composition (basic and acidic residues); the sequence is KALREQDGEALANEEKEITDEEKKEVL. Residues 223–263 are disordered; the sequence is KALREQDGEALANEEKEITDEEKKEVLDEAMSEEDFGEEQE. A compositionally biased stretch (acidic residues) spans 250-263; that stretch reads DEAMSEEDFGEEQE.

It belongs to the universal ribosomal protein uS2 family.

The chain is Small ribosomal subunit protein uS2 from Campylobacter jejuni subsp. jejuni serotype O:6 (strain 81116 / NCTC 11828).